Here is a 225-residue protein sequence, read N- to C-terminus: 7-cyano-7-deazaguanine synthase (225 aa).

9 to 19 (LSGGLDSATCL) serves as a coordination point for ATP. Zn(2+)-binding residues include C189, C199, C202, and C205.

This sequence belongs to the QueC family. It depends on Zn(2+) as a cofactor.

The catalysed reaction is 7-carboxy-7-deazaguanine + NH4(+) + ATP = 7-cyano-7-deazaguanine + ADP + phosphate + H2O + H(+). It functions in the pathway purine metabolism; 7-cyano-7-deazaguanine biosynthesis. Catalyzes the ATP-dependent conversion of 7-carboxy-7-deazaguanine (CDG) to 7-cyano-7-deazaguanine (preQ(0)). The chain is 7-cyano-7-deazaguanine synthase from Dechloromonas aromatica (strain RCB).